Reading from the N-terminus, the 150-residue chain is MSDYKIWVDADACPNPIKEILFRAAERKALPLVLVANQMIRIPPSPYISQIRVGAGFDVADQYIVDHVEPTHLVITADIPLAALIIEKGALALNPRGELYTVDNIKQKLTMRDFMEDLRGSGVHTGGPDSFSQADKQAFANSLDKWLVRV.

Belongs to the UPF0178 family.

In Shewanella baltica (strain OS223), this protein is UPF0178 protein Sbal223_2514.